Consider the following 102-residue polypeptide: Small ribosomal subunit protein uS14 (102 aa).

The protein belongs to the universal ribosomal protein uS14 family. Part of the 30S ribosomal subunit. Contacts proteins S3 and S10.

Its function is as follows. Binds 16S rRNA, required for the assembly of 30S particles and may also be responsible for determining the conformation of the 16S rRNA at the A site. The sequence is that of Small ribosomal subunit protein uS14 from Dichelobacter nodosus (strain VCS1703A).